Reading from the N-terminus, the 345-residue chain is Telomere-binding protein cav (345 aa).

The tract at residues 115–337 is required for binding to Su(var)205; sequence RRKMVQPYPE…TITFQNTESE (223 aa). Disordered regions lie at residues 145 to 180 and 200 to 231; these read RLDRWQKKKSQNLSAPESSPDAHASSNDAVQSHEDQ and PPGVSSSDLSGIGDDEDEQQQSGFQDENINRP. 2 consecutive short sequence motifs (su(var)205-binding Pro-containing repeat) follow at residues 231–237 and 298–304; these read PETEINE and PETEMNE.

In terms of assembly, component of the HipHop-HOAP telomere capping complex, composed of at least HipHop and cav/HOAP, and may include Su(var)205/HP1; HipHop and cav/HOAP, but not Su(var)205, are interdependent for their protein stability. Interacts with HipHop (via N-terminus). Interacts (via C-terminus) with Su(var)205/HP1 dimer (via hinge and chromoshadow domain) and Orc1; possibly interacts with other components of the origin recognition complex (ORC). Each molecule of cav/HOAP interacts with 2 molecules of Su(var)205/HP1. The HipHop-HOAP complex recruits the MTV complex, consisting of moi/modigliani, tea and ver/verrocchio, to telomeres, forming the terminin telomere-capping complex. Interacts with moi/modigliani; the interaction is direct. Interacts with ver/verrochio; the interaction is direct. Interacts with HP6, which is also part of the terminin complex. Interacts (via N-terminus) with peo/pendolino (via N-terminus); the interaction is direct.

The protein resides in the nucleus. It is found in the chromosome. Its subcellular location is the telomere. Part of the HipHop-HOAP complex that recruits the MTV complex to form the terminin telomere-capping complex, which binds to chromosome ends in a sequence-independent manner and prevents telomere fusion. Telomere capping is independent of the origin recognition complex (ORC). The polypeptide is Telomere-binding protein cav (Drosophila melanogaster (Fruit fly)).